We begin with the raw amino-acid sequence, 449 residues long: Trigger factor (449 aa).

The region spanning 172 to 257 is the PPIase FKBP-type domain; that stretch reads GDRVTVDFVG…LKQVEWAHLP (86 aa).

It belongs to the FKBP-type PPIase family. Tig subfamily.

Its subcellular location is the cytoplasm. The catalysed reaction is [protein]-peptidylproline (omega=180) = [protein]-peptidylproline (omega=0). Functionally, involved in protein export. Acts as a chaperone by maintaining the newly synthesized protein in an open conformation. Functions as a peptidyl-prolyl cis-trans isomerase. In Ralstonia nicotianae (strain ATCC BAA-1114 / GMI1000) (Ralstonia solanacearum), this protein is Trigger factor.